We begin with the raw amino-acid sequence, 378 residues long: UDP-N-acetylenolpyruvoylglucosamine reductase (378 aa).

The region spanning 15-185 (VGGTPERLLE…LSVDLELADH (171 aa)) is the FAD-binding PCMH-type domain. Arg163 is a catalytic residue. The active-site Proton donor is the Ser248. Glu370 is an active-site residue.

The protein belongs to the MurB family. Requires FAD as cofactor.

It is found in the cytoplasm. The enzyme catalyses UDP-N-acetyl-alpha-D-muramate + NADP(+) = UDP-N-acetyl-3-O-(1-carboxyvinyl)-alpha-D-glucosamine + NADPH + H(+). It participates in cell wall biogenesis; peptidoglycan biosynthesis. Its function is as follows. Cell wall formation. The sequence is that of UDP-N-acetylenolpyruvoylglucosamine reductase from Leifsonia xyli subsp. xyli (strain CTCB07).